The chain runs to 207 residues: Phosphoserine phosphatase (207 aa).

The active-site Nucleophile is aspartate 8. Residues aspartate 8 and aspartate 10 each coordinate Mg(2+). Aspartate 10 (proton donor) is an active-site residue. Residues glutamate 17, arginine 53, 96–97 (SG), and lysine 141 contribute to the substrate site. Mg(2+) is bound at residue aspartate 164. Asparagine 167 contacts substrate.

It belongs to the HAD-like hydrolase superfamily. SerB family. Mg(2+) is required as a cofactor.

It carries out the reaction O-phospho-L-serine + H2O = L-serine + phosphate. The catalysed reaction is O-phospho-D-serine + H2O = D-serine + phosphate. Its pathway is amino-acid biosynthesis; L-serine biosynthesis; L-serine from 3-phospho-D-glycerate: step 3/3. The sequence is that of Phosphoserine phosphatase from Campylobacter jejuni subsp. doylei (strain ATCC BAA-1458 / RM4099 / 269.97).